A 629-amino-acid chain; its full sequence is tRNA uridine 5-carboxymethylaminomethyl modification enzyme MnmG (629 aa).

FAD contacts are provided by residues 13–18 (GGGHAG), valine 125, and serine 180. 273-287 (GPRYCPSIEDKVMRF) provides a ligand contact to NAD(+). An FAD-binding site is contributed by glutamine 370.

It belongs to the MnmG family. Homodimer. Heterotetramer of two MnmE and two MnmG subunits. The cofactor is FAD.

The protein resides in the cytoplasm. In terms of biological role, NAD-binding protein involved in the addition of a carboxymethylaminomethyl (cmnm) group at the wobble position (U34) of certain tRNAs, forming tRNA-cmnm(5)s(2)U34. In Shigella dysenteriae serotype 1 (strain Sd197), this protein is tRNA uridine 5-carboxymethylaminomethyl modification enzyme MnmG.